We begin with the raw amino-acid sequence, 193 residues long: MIGRIQGTLVSVHPPRLLVDCQGVGYEIDVPMSTLYQLPEVNQKITLLTHFQVREDAQQLFGFATEIEREAFRQLIKISGVGSRTALAVLSGMSVNELAQAIALQEAGRLTQVPGIGKKTAERLCLELKGKLAPDLGITGGKPQAIEATSEVLQALLSLGYSEKEALLALKQIPPETSVSDGIRMGLKYLSKP.

Residues 1-64 (MIGRIQGTLV…EDAQQLFGFA (64 aa)) form a domain I region. The domain II stretch occupies residues 65–139 (TEIEREAFRQ…GKLAPDLGIT (75 aa)). The tract at residues 139-143 (TGGKP) is flexible linker. Positions 144–193 (QAIEATSEVLQALLSLGYSEKEALLALKQIPPETSVSDGIRMGLKYLSKP) are domain III.

Belongs to the RuvA family. In terms of assembly, homotetramer. Forms an RuvA(8)-RuvB(12)-Holliday junction (HJ) complex. HJ DNA is sandwiched between 2 RuvA tetramers; dsDNA enters through RuvA and exits via RuvB. An RuvB hexamer assembles on each DNA strand where it exits the tetramer. Each RuvB hexamer is contacted by two RuvA subunits (via domain III) on 2 adjacent RuvB subunits; this complex drives branch migration. In the full resolvosome a probable DNA-RuvA(4)-RuvB(12)-RuvC(2) complex forms which resolves the HJ.

The protein resides in the cytoplasm. Its function is as follows. The RuvA-RuvB-RuvC complex processes Holliday junction (HJ) DNA during genetic recombination and DNA repair, while the RuvA-RuvB complex plays an important role in the rescue of blocked DNA replication forks via replication fork reversal (RFR). RuvA specifically binds to HJ cruciform DNA, conferring on it an open structure. The RuvB hexamer acts as an ATP-dependent pump, pulling dsDNA into and through the RuvAB complex. HJ branch migration allows RuvC to scan DNA until it finds its consensus sequence, where it cleaves and resolves the cruciform DNA. In Polynucleobacter asymbioticus (strain DSM 18221 / CIP 109841 / QLW-P1DMWA-1) (Polynucleobacter necessarius subsp. asymbioticus), this protein is Holliday junction branch migration complex subunit RuvA.